A 417-amino-acid chain; its full sequence is MAAETATSKQNLVILGGSYAGLSTAHYLLRHVVPQLPGKESYQVILISASSEAMCRPACPRALISDDMFQQDKLFVSIPAQFEQYLKDTFKFIHGTVTSLDHQDRCVTVSVKDGDPEKIKCHAIVIATGASTASPLLGLNRDSETLRTNWNEFRAALPTAKHIVIAGGGPAGVETAGELGEYLNGRAGWFHSKLENPKVEITLVTADSKILPILRPALATKAEKLLNKVGVTVIKKSRVTNVTPPGAGAEDALTANATVTLEDGKELQADLYIPATGMTYNSSFVDASLLTDYGRVETDPGTLRVVNGGALLYAIGDVGSHARPAVHNILNTVPILCANMKRDLLLAVQPDASVGEDRQFKEDTRETQLVPVGRSKGVGAFMGFRQPGFMVWLIKGRDYWLWTTEGLWSGKHWAKGS.

6-hydroxy-FAD contacts are provided by residues 16 to 20 (GGSYA), Arg-61, and Asp-317.

It belongs to the FAD-dependent oxidoreductase family. 6-hydroxy-FAD serves as cofactor.

It catalyses the reaction deoxyherqueinone + NADPH + O2 + H(+) = herqueinone + NADP(+) + H2O. It functions in the pathway secondary metabolite biosynthesis. Oxidoreductase; part of the gene cluster that mediates the biosynthesis of phenalenones such as herqueinone, compounds that have been reported to treat tumors, bacterial infections and/or mycoses, and rheumatic diseases. The non-reducing polyketide synthase phnA synthesizes the heptaketide backbone and cyclizes it into the angular, hemiketal-containing naphtho-gamma-pyrone prephenalenone. The product template (PT) domain of phnA catalyzes only the C4-C9 aldol condensation, which is unprecedented among known PT domains. The transformation of prephenalenone to phenalenones requires an FAD-dependent monooxygenase phnB, which catalyzes the C2 aromatic hydroxylation of prephenalenone and ring opening of the gamma-pyrone ring simultaneously. Subsequent intramolecular deprotonation of C3 phenolic oxygen accelerates phenalenone ring closure to yield the tricyclic phenalenone core with a C2 hydroxylation. The prenyltransferase phnF further catalyzes reverse C-prenylation of phenalenone by direct electrophilic substitution at C6, or possibly via first a forward O-prenylation of a neighboring phenol in phenalenone, followed by a Claisen rearrangement. The hydroalkoxylation enzyme phnH catalyzes the 5-exo-trig cyclization via acid catalysis after the spontaneous deprotonation of 7-OH, which leads to the formation of the dihydrobenzofuran atrovenetin. Atrovenetin is further converted to deoxyherqueinone by the O-methyltransferase phnC which can methylate C2-OH to stabilize the northern portion of the phenalenone core. Finally, the oxidoreductase phnG converts deoxyherqueinone to herqueinone via C6 hydroxylation. The protein is Oxidoreductase phnG of Penicillium herquei.